The chain runs to 133 residues: Small ribosomal subunit protein uS8 (133 aa).

This sequence belongs to the universal ribosomal protein uS8 family. As to quaternary structure, part of the 30S ribosomal subunit. Contacts proteins S5 and S12.

Its function is as follows. One of the primary rRNA binding proteins, it binds directly to 16S rRNA central domain where it helps coordinate assembly of the platform of the 30S subunit. The polypeptide is Small ribosomal subunit protein uS8 (Prochlorococcus marinus (strain SARG / CCMP1375 / SS120)).